Consider the following 35-residue polypeptide: Photosystem II reaction center protein Y (35 aa).

At 1 to 4 (MDTR) the chain is on the lumenal side. Residues 5-23 (LLVVLLPVATAAAWALFNI) traverse the membrane as a helical segment. The Stromal segment spans residues 24 to 35 (GRLALQQLKRMS).

The protein belongs to the PsbY family. As to quaternary structure, PSII is composed of 1 copy each of membrane proteins PsbA, PsbB, PsbC, PsbD, PsbE, PsbF, PsbH, PsbI, PsbJ, PsbK, PsbL, PsbM, PsbT, PsbX, PsbY, PsbZ, Psb30/Ycf12, at least 3 peripheral proteins of the oxygen-evolving complex and a large number of cofactors. It forms dimeric complexes.

It localises to the plastid. It is found in the chloroplast thylakoid membrane. In terms of biological role, loosely associated component of the core of photosystem II (PSII), it is not always seen in crystals. PSII is a light-driven water plastoquinone oxidoreductase, using light energy to abstract electrons from H(2)O, generating a proton gradient subsequently used for ATP formation. This is Photosystem II reaction center protein Y from Emiliania huxleyi (Coccolithophore).